The sequence spans 102 residues: Co-chaperonin GroES (102 aa).

The protein belongs to the GroES chaperonin family. Heptamer of 7 subunits arranged in a ring. Interacts with the chaperonin GroEL.

The protein resides in the cytoplasm. In terms of biological role, together with the chaperonin GroEL, plays an essential role in assisting protein folding. The GroEL-GroES system forms a nano-cage that allows encapsulation of the non-native substrate proteins and provides a physical environment optimized to promote and accelerate protein folding. GroES binds to the apical surface of the GroEL ring, thereby capping the opening of the GroEL channel. The sequence is that of Co-chaperonin GroES from Streptomyces albus G.